The sequence spans 382 residues: MPRSPRRWTPEEDRVLLDKVKQLFSDGAKNDTTISWATVANALPDRNNKDCRKRWSKITGAKKGSWSLSEDEQLLEGVQKYGRQWAMVAKGVETRSADQCAKRWQHCLDPSLDRSEWRSDQDARLVAAVRRYGTNWKDIKKFEFPKRSTTNLKNRHITLFRQRNKAPGACPGSTETLGPGIDWWSMEQGMIDDMSMDASEDGDDAEDDQTPDSYTSISTSSFDDILGGSSSSPSAADTMTTASPDPYQYLLDWAVPSHADLVQAATSYYPSLDGFLGSTYDHNAKIDSSLGRDANGGNFIPGFPTQTPSQFESIDVSQISDGIVSGEPSRQGASRECRAASNVSSGPQMTLTIDNPDPQTMTGILEVLAKANSKVTISMNRE.

Myb-like domains lie at 1–57, 58–108, and 109–160; these read MPRS…RWSK, ITGA…QHCL, and DPSL…ITLF. Positions 194 to 210 are enriched in acidic residues; that stretch reads MSMDASEDGDDAEDDQT. The tract at residues 194 to 240 is disordered; sequence MSMDASEDGDDAEDDQTPDSYTSISTSSFDDILGGSSSSPSAADTMT. A compositionally biased stretch (polar residues) spans 211-240; sequence PDSYTSISTSSFDDILGGSSSSPSAADTMT.

Its subcellular location is the nucleus. In terms of biological role, transcription factor; part of the gene cluster that mediates the biosynthesis of 1233A, a natural compound known as an inhibitor of HMG-CoA synthase in the mevalonate pathway and with antibacterial and antifungal activities. Involved in hygromycin B-induced transcriptional control of the cluster. The polypeptide is Myb-like transcription factor (Fusarium sp).